Here is a 484-residue protein sequence, read N- to C-terminus: Fork head protein homolog 1 (484 aa).

An FHA domain is found at 76 to 142; the sequence is VTIGRNTDSL…NGAKVNFRRI (67 aa). Positions 302-393 form a DNA-binding region, fork-head; the sequence is IKPPQSYASM…RRDFLNKWNA (92 aa).

As to quaternary structure, interacts (via FHA domain) with ECM30, GLN3, URE2, MPH1 AND FDO1. Interacts with the origin recognition complex (ORC) composed of ORC1 to ORC6.

The protein resides in the nucleus. It localises to the cytoplasm. The protein localises to the cytosol. Functionally, transcription factor that regulates the expression of the CLB2 cluster of genes during the G2/M phase of the mitotic cell cycle. The CLB2 cluster of genes includes mitotic regulators such as CLB1, CLB2, CDC5 and CDC20 as well as SWI5 and ACE2, transcription factors required for the subsequent temporal wave of cell cycle regulated gene expression in the M/G1 phase interval. Involved in HMRa silencing. FKH1 and FKH2 associate with the coding regions of active genes and influence, in opposing ways, transcriptional elongation and termination, and coordinate early transcription elongation and pre-mRNA processing. Both FKH1 and FKH2 play a role as regulators of lifespan in collaboration with the anaphase-promoting complex (APC), likely through combined regulation of stress response, genomic stability, and cell cycle regulation. FKH1 and FKH2 function also in controlling yeast cell morphology by preventing preudohyphal growth. Acts as a rate-limiting replication origin activator via its interaction with the origin recognition complex (ORC). Plays a transcription-independent role in recombination donor preference during mating-type switching through binding to the recombination enhancer (RE), a 700-bp cis-acting element that controls recombination along the left arm of chromosome III. The polypeptide is Fork head protein homolog 1 (Saccharomyces cerevisiae (strain ATCC 204508 / S288c) (Baker's yeast)).